The sequence spans 294 residues: Enoyl-CoA hydratase domain-containing protein 3, mitochondrial (294 aa).

A mitochondrion-targeting transit peptide spans 1 to 61 (MSWLRSCGER…IILNNPQQRN (61 aa)).

The protein belongs to the enoyl-CoA hydratase/isomerase family.

The protein localises to the mitochondrion. Functionally, may play a role in fatty acid biosynthesis and insulin sensitivity. The protein is Enoyl-CoA hydratase domain-containing protein 3, mitochondrial (echdc3) of Xenopus laevis (African clawed frog).